Here is a 242-residue protein sequence, read N- to C-terminus: Ribonuclease 3 (242 aa).

The region spanning 12–139 (ANELLEALGT…LIGATFLEHG (128 aa)) is the RNase III domain. Residue Glu-51 participates in Mg(2+) binding. Asp-55 is a catalytic residue. Mg(2+) contacts are provided by Asp-125 and Glu-128. The active site involves Glu-128. In terms of domain architecture, DRBM spans 165–236 (LDWKTSLTVK…AEAGWKSLDS (72 aa)).

Belongs to the ribonuclease III family. Homodimer. The cofactor is Mg(2+).

It localises to the cytoplasm. It carries out the reaction Endonucleolytic cleavage to 5'-phosphomonoester.. Digests double-stranded RNA. Involved in the processing of primary rRNA transcript to yield the immediate precursors to the large and small rRNAs (23S and 16S). Processes some mRNAs, and tRNAs when they are encoded in the rRNA operon. Processes pre-crRNA and tracrRNA of type II CRISPR loci if present in the organism. This Bifidobacterium longum (strain NCC 2705) protein is Ribonuclease 3.